The sequence spans 409 residues: MARDVKKVVLAYSGGLDTSVILKWLQTTYKCEVITFTADLGQGEELEPARKKAQLLGIKDENIFIEDVREEFVAEYVFPMFRANAVYEGLYLLGTSIARPLIAKKQIEIARKMGADAVSHGATGKGNDQVRFELGYYALEPEITVIAPWREWDLTSRTRLLEFAEQHQIPIAKDKRGEAPFSVDANLLHSSSEGKVLEDPAEDAPEYVYQRTISPEAAPDEPTIITIAFDKGDAVAINGEALSPATLLTKLNELGKANGIGRLDLVENRFVGMKSRGVYETPGGTILLAAHRGIESITLDRGAAHLKDELMPRYAELIYNGFWFSPEREMLQAAIDHSQAYVTGEVTVKLYKGNTTVIGRKSPYSLYNQELVTFEEGAVAYDHRDAAGFIKLNALRLRTLGSRARKISE.

ATP-binding positions include Ala11 to Ser19 and Ala38. The L-citrulline site is built by Tyr91 and Ser96. Gly121 serves as a coordination point for ATP. Residues Thr123, Asn127, and Asp128 each contribute to the L-aspartate site. Asn127 provides a ligand contact to L-citrulline. L-citrulline is bound by residues Arg131, Ser182, Ser191, Glu267, and Tyr279.

Belongs to the argininosuccinate synthase family. Type 1 subfamily. In terms of assembly, homotetramer.

It localises to the cytoplasm. It catalyses the reaction L-citrulline + L-aspartate + ATP = 2-(N(omega)-L-arginino)succinate + AMP + diphosphate + H(+). It participates in amino-acid biosynthesis; L-arginine biosynthesis; L-arginine from L-ornithine and carbamoyl phosphate: step 2/3. The sequence is that of Argininosuccinate synthase from Xanthobacter autotrophicus (strain ATCC BAA-1158 / Py2).